A 118-amino-acid chain; its full sequence is Neutral phospholipase A2 homolog taipoxin beta chain 2 (118 aa).

Disulfide bonds link Cys11/Cys71, Cys27/Cys117, Cys29/Cys45, Cys44/Cys98, Cys51/Cys91, Cys60/Cys84, and Cys78/Cys89.

This sequence belongs to the phospholipase A2 family. Group I subfamily. D49 sub-subfamily. In terms of assembly, heterotrimer of alpha, beta, and gamma chains; non-covalently linked. As to expression, expressed by the venom gland.

It localises to the secreted. Its function is as follows. Heterotrimer: Snake venom phospholipase A2 (PLA2) heterotrimer that acts as a potent presynaptic neurotoxin by blocking synaptic transmission and synaptic vesicle recycling. May act by binding in a calcium-dependent fashion to neurotonal pentraxin-1 (NPTX1) and neurotonal pentraxin-2 (NPTX2), but not to neuronal pentraxin receptor (NPTXR). Also binds to taipoxin-associated calcium binding protein 49 (RCN2), a protein localized in the lumen of endoplasmic reticulum. In terms of biological role, monomer (beta chain): Snake venom phospholipase A2 homolog that is neither toxic nor enzymatically active. Does not bind calcium. The protein is Neutral phospholipase A2 homolog taipoxin beta chain 2 of Oxyuranus scutellatus scutellatus (Australian taipan).